The primary structure comprises 467 residues: Sodium-dependent phosphate transport protein 1 (467 aa).

N-linked (GlcNAc...) asparagine glycosylation is found at Asn-41, Asn-49, and Asn-58. Helical transmembrane passes span Gly-81–Phe-101, Ser-119–Cys-139, Phe-178–Trp-198, Met-200–Phe-220, Ala-257–Ser-277, Gly-301–Leu-321, Leu-339–Ser-359, Ile-365–Ile-385, Cys-401–Leu-421, and Phe-433–Ala-453.

This sequence belongs to the major facilitator superfamily. Sodium/anion cotransporter family. Interacts with PDZK1. In terms of tissue distribution, expressed in kidney cortex, liver and brain but not in other tissues.

The protein resides in the apical cell membrane. It catalyses the reaction 3 Na(+)(out) + phosphate(out) = 3 Na(+)(in) + phosphate(in). The catalysed reaction is urate(out) = urate(in). Functionally, important for the resorption of phosphate by the kidney. May be involved in actively transporting phosphate into cells via Na(+) cotransport in the renal brush border membrane. Plays a role in urate transport in the kidney. The protein is Sodium-dependent phosphate transport protein 1 (SLC17A1) of Homo sapiens (Human).